Here is a 687-residue protein sequence, read N- to C-terminus: RNA-binding protein VTS1 (687 aa).

Basic residues predominate over residues methionine 1–arginine 10. 3 disordered regions span residues methionine 1–alanine 115, alanine 248–glycine 341, and serine 526–alanine 598. Positions threonine 29–serine 41 are enriched in polar residues. The span at glycine 52–serine 68 shows a compositional bias: low complexity. Residues glycine 287–proline 301 show a composition bias toward polar residues. Basic and acidic residues predominate over residues proline 305–serine 324. The span at serine 526 to leucine 539 shows a compositional bias: polar residues. Residues glutamine 550–glutamine 566 are compositionally biased toward low complexity. A compositionally biased stretch (gly residues) spans glutamine 585–valine 597. The SAM domain occupies lysine 606–lysine 667.

This sequence belongs to the VTS1 family. As to quaternary structure, monomer. Binds to RNA.

It localises to the cytoplasm. The protein localises to the cytosol. It is found in the P-body. In terms of biological role, RNA-binding protein involved in post-transcriptional regulation through transcript degradation. In Cryptococcus neoformans var. grubii serotype A (strain H99 / ATCC 208821 / CBS 10515 / FGSC 9487) (Filobasidiella neoformans var. grubii), this protein is RNA-binding protein VTS1.